The chain runs to 351 residues: ATP-dependent 6-phosphofructokinase subunit gamma (351 aa).

In terms of assembly, heterododecamer of 4 alpha, 4 beta and 4 gamma chains. The gamma chain bridges the N-terminal halves of the alpha and beta subunits.

The protein localises to the cytoplasm. Its pathway is carbohydrate degradation; glycolysis; D-glyceraldehyde 3-phosphate and glycerone phosphate from D-glucose: step 3/4. In terms of biological role, structural subunit of pyrophosphate--fructose 6-phosphate 1-phosphotransferase. Not required for catalytic activity. Fine-tunes allosteric regulation of the ATP-PFK by ATP, fructose 2,6-bisphosphate and AMP. The sequence is that of ATP-dependent 6-phosphofructokinase subunit gamma (PFK3) from Komagataella phaffii (strain GS115 / ATCC 20864) (Yeast).